Here is a 792-residue protein sequence, read N- to C-terminus: RAD50-interacting protein 1 (792 aa).

The disordered stretch occupies residues 1-22 (MLPAGEIGASPAAPCCSESGDE). Residues 103–124 (IRSALKNAEESKQFLNQFLEQE) are a coiled coil. The RINT1/TIP20 domain occupies 220-792 (WHKILKDKLT…LRTNWPNTGK (573 aa)).

This sequence belongs to the RINT1 family. As to quaternary structure, component of the NRZ complex composed of NBAS, ZW10 and RINT1/TIP20L; NRZ associates with SNAREs STX18, USE1L, BNIP1/SEC20L and SEC22B (the assembly has been described as syntaxin 18 complex). Interacts directly with BNIP1/SEC20L and ZW10. Interacts with UVRAG. Interacts with RAD50 during late S and G2/M phases. Interacts with RBL2, preferentially with the active, hypophosphorylated form.

Its subcellular location is the cytoplasm. It is found in the endoplasmic reticulum membrane. Its function is as follows. Involved in regulation of membrane traffic between the Golgi and the endoplasmic reticulum (ER); the function is proposed to depend on its association in the NRZ complex which is believed to play a role in SNARE assembly at the ER. May play a role in cell cycle checkpoint control. Essential for telomere length control. This is RAD50-interacting protein 1 (RINT1) from Homo sapiens (Human).